Reading from the N-terminus, the 388-residue chain is Lipid-A-disaccharide synthase (388 aa).

Belongs to the LpxB family.

It catalyses the reaction a lipid X + a UDP-2-N,3-O-bis[(3R)-3-hydroxyacyl]-alpha-D-glucosamine = a lipid A disaccharide + UDP + H(+). The protein operates within bacterial outer membrane biogenesis; LPS lipid A biosynthesis. In terms of biological role, condensation of UDP-2,3-diacylglucosamine and 2,3-diacylglucosamine-1-phosphate to form lipid A disaccharide, a precursor of lipid A, a phosphorylated glycolipid that anchors the lipopolysaccharide to the outer membrane of the cell. The chain is Lipid-A-disaccharide synthase from Burkholderia mallei (strain ATCC 23344).